We begin with the raw amino-acid sequence, 90 residues long: U7-theraphotoxin-Hhn1j (90 aa).

A signal peptide spans 1 to 19 (MKTAIFTVVLALAVFAVLS). Positions 20–50 (FGWEANEKALSEEFTELIHEKEAASETEARE) are excised as a propeptide. 3 disulfide bridges follow: cysteine 51–cysteine 65, cysteine 58–cysteine 70, and cysteine 64–cysteine 81.

The protein belongs to the neurotoxin 10 (Hwtx-1) family. 13 (Hntx-13) subfamily. Expressed by the venom gland.

It is found in the secreted. Ion channel inhibitor. This is U7-theraphotoxin-Hhn1j from Cyriopagopus hainanus (Chinese bird spider).